A 105-amino-acid polypeptide reads, in one-letter code: MATLQQQKIRIRLQAFDRRLLDTSCEKIVDTANRTNATAIGPIPLPTKRRIYCVLRSPHVDKDSREHFETRTHRRIIDIYQPSSKTIDALMKLDLPSGVDIEVKL.

It belongs to the universal ribosomal protein uS10 family. Part of the 30S ribosomal subunit.

Functionally, involved in the binding of tRNA to the ribosomes. The chain is Small ribosomal subunit protein uS10 from Nostoc punctiforme (strain ATCC 29133 / PCC 73102).